Here is a 95-residue protein sequence, read N- to C-terminus: Aspartyl/glutamyl-tRNA(Asn/Gln) amidotransferase subunit C (95 aa).

This sequence belongs to the GatC family. In terms of assembly, heterotrimer of A, B and C subunits.

The catalysed reaction is L-glutamyl-tRNA(Gln) + L-glutamine + ATP + H2O = L-glutaminyl-tRNA(Gln) + L-glutamate + ADP + phosphate + H(+). It carries out the reaction L-aspartyl-tRNA(Asn) + L-glutamine + ATP + H2O = L-asparaginyl-tRNA(Asn) + L-glutamate + ADP + phosphate + 2 H(+). In terms of biological role, allows the formation of correctly charged Asn-tRNA(Asn) or Gln-tRNA(Gln) through the transamidation of misacylated Asp-tRNA(Asn) or Glu-tRNA(Gln) in organisms which lack either or both of asparaginyl-tRNA or glutaminyl-tRNA synthetases. The reaction takes place in the presence of glutamine and ATP through an activated phospho-Asp-tRNA(Asn) or phospho-Glu-tRNA(Gln). This chain is Aspartyl/glutamyl-tRNA(Asn/Gln) amidotransferase subunit C, found in Campylobacter lari (strain RM2100 / D67 / ATCC BAA-1060).